The primary structure comprises 635 residues: Extracellular metalloproteinase MEP (635 aa).

A signal peptide spans 1 to 19; that stretch reads MRAFLLASLASLPAVNVYA. The propeptide occupies 20 to 244; it reads HPTHNSRGLT…VHAVVDYAAE (225 aa). 3 N-linked (GlcNAc...) asparagine glycosylation sites follow: N287, N302, and N336. Residue H429 coordinates Zn(2+). The active site involves E430. H433 is a binding site for Zn(2+).

This sequence belongs to the peptidase M36 family. Zn(2+) is required as a cofactor.

The protein localises to the secreted. Functionally, secreted metalloproteinase that allows assimilation of proteinaceous substrates. The chain is Extracellular metalloproteinase MEP (MEP) from Leptosphaeria maculans (strain JN3 / isolate v23.1.3 / race Av1-4-5-6-7-8) (Blackleg fungus).